Consider the following 591-residue polypeptide: Solute carrier family 40 member 2, chloroplastic (591 aa).

The N-terminal 66 residues, 1-66 (MGMVTATAAA…RCYITNVEVD (66 aa)), are a transit peptide targeting the chloroplast. 11 helical membrane-spanning segments follow: residues 159 to 179 (WPAALAILHPSLLPVAIVGFF), 206 to 226 (GLNAVQVATQLISAAMVIYAM), 242 to 262 (WFIALVAAGAIERLAGLALGV), 293 to 313 (LVCETVGASVFGLLLSKYHPV), 318 to 338 (IACGLMICSFPVLVVLGQLIN), 391 to 411 (VATVFLNFNVALAPGAIMTAL), 419 to 439 (PSIVGAFSGLCSIMGLVATFI), 452 to 472 (AGAAGLIVQASLLSVALVVYW), 482 to 502 (LLIFLAAIALSRLGHMSYDVV), 518 to 540 (LIGGMEVSISSLAELVMLGMAII), and 547 to 569 (FGFLAILSVSSVAGAAWMFCQWL).

This sequence belongs to the ferroportin (FP) (TC 2.A.100) family. SLC40A subfamily.

The protein resides in the membrane. Its subcellular location is the plastid. It is found in the chloroplast envelope. In terms of biological role, may be involved in iron transport and iron homeostasis. This chain is Solute carrier family 40 member 2, chloroplastic, found in Oryza sativa subsp. japonica (Rice).